A 188-amino-acid chain; its full sequence is Calcium load-activated calcium channel (188 aa).

Residues 1–4 (MSTM) lie on the Lumenal side of the membrane. The helical transmembrane segment at 5–32 (FADTLLIVFISVCTALLAEGITWVLVYR) threads the bilayer. Residues 32-89 (RTDKYKRLKAEVEKQSKKLEKKKETITESAGRQQKKKIERQEEKLKNNNRDLSMVRMK) adopt a coiled-coil conformation. Over 33–86 (TDKYKRLKAEVEKQSKKLEKKKETITESAGRQQKKKIERQEEKLKNNNRDLSMV) the chain is Cytoplasmic. Ser60 carries the post-translational modification Phosphoserine. A helical transmembrane segment spans residues 87 to 106 (RMKSMFAIGFCFTALMGMFN). At 107 to 120 (SIFDGRVVAKLPFT) the chain is on the lumenal side. The stretch at 121–130 (PLSYIQGLSH) is an intramembrane region. Topologically, residues 131–140 (RNLLGDDTTD) are lumenal. The helical transmembrane segment at 141-162 (CSFIFLYILCTMSIRQNIQKIL) threads the bilayer. Residues 163 to 188 (GLAPSRAATKQAGGFLGPPPPSGKFS) lie on the Cytoplasmic side of the membrane. Ser188 is modified (phosphoserine).

This sequence belongs to the TMCO1 family. Homodimer and homotetramer. Homodimer under resting conditions; forms homotetramers following ER calcium overload. Component of the GET- and EMC-like (GEL) complex, composed of RAB5IF/OPTI and TMCO1. The GEL complex is part of the multi-pass translocon (MPT) complex, composed of three subcomplexes, the GEL complex (composed of RAB5IF/OPTI and TMCO1), the BOS complex (composed of NCLN/Nicalin, NOMO1 and TMEM147) and the PAT complex (composed of WDR83OS/Asterix and CCDC47). The MPT complex associates with the SEC61 complex.

It is found in the endoplasmic reticulum membrane. Its subcellular location is the golgi apparatus membrane. The protein resides in the mitochondrion membrane. The catalysed reaction is Ca(2+)(in) = Ca(2+)(out). Functionally, endoplasmic reticulum (ER) calcium-selective channel preventing intracellular Ca2(+) stores from overfilling and maintaining calcium homeostasis in the ER. In response to endoplasmic reticulum (ER) Ca2(+) overloading, assembles into a homotetramer, forming a functional calcium-selective channel facilitating Ca2(+) release. Mediates ER Ca2(+) homeostasis in osteoblasts and plays a key role in bone formation, via the CaMKII-HDAC4-RUNX2 signaling axis. Component of the multi-pass translocon (MPT) complex that mediates insertion of multi-pass membrane proteins into the lipid bilayer of membranes. The MPT complex takes over after the SEC61 complex: following membrane insertion of the first few transmembrane segments of proteins by the SEC61 complex, the MPT complex occludes the lateral gate of the SEC61 complex to promote insertion of subsequent transmembrane regions. Within the MPT complex, the GEL subcomplex may mediate insertion of transmembrane regions into the membrane. This is Calcium load-activated calcium channel from Bos taurus (Bovine).